A 71-amino-acid polypeptide reads, in one-letter code: UPF0437 protein asl1434 (71 aa).

It belongs to the UPF0437 family.

This is UPF0437 protein asl1434 from Nostoc sp. (strain PCC 7120 / SAG 25.82 / UTEX 2576).